Reading from the N-terminus, the 146-residue chain is Hemoglobin subunit beta (146 aa).

V1 is subject to N-acetylvaline. In terms of domain architecture, Globin spans 2 to 146; that stretch reads HLTGEEKTAV…VANALAHKYH (145 aa). Residue T12 is modified to Phosphothreonine. Position 44 is a phosphoserine (S44). K59 is modified (N6-acetyllysine). Residue H63 participates in heme b binding. K82 is subject to N6-acetyllysine. A heme b-binding site is contributed by H92. An S-nitrosocysteine modification is found at C93. K144 carries the post-translational modification N6-acetyllysine.

Belongs to the globin family. Heterotetramer of two alpha chains and two beta chains. In terms of tissue distribution, red blood cells.

Involved in oxygen transport from the lung to the various peripheral tissues. This is Hemoglobin subunit beta (HBB) from Nasua nasua (Ring-tailed coati).